The chain runs to 549 residues: Alpha-amylase (549 aa).

The first 34 residues, methionine 1–alanine 34, serve as a signal peptide directing secretion. Positions 139, 196, 218, 220, 231, and 237 each coordinate Ca(2+). A Na(+)-binding site is contributed by aspartate 196. 4 residues coordinate Na(+): aspartate 220, aspartate 231, aspartate 237, and leucine 238. Aspartate 239 contributes to the Ca(2+) binding site. Aspartate 268 acts as the Nucleophile in catalysis. Histidine 272 serves as a coordination point for Ca(2+). Residue glutamate 298 is the Proton donor of the active site. Glycine 337, phenylalanine 339, serine 440, aspartate 441, and aspartate 464 together coordinate Ca(2+).

The protein belongs to the glycosyl hydrolase 13 family. In terms of assembly, monomer. It depends on Ca(2+) as a cofactor. Requires Na(+) as cofactor.

Its subcellular location is the secreted. It catalyses the reaction Endohydrolysis of (1-&gt;4)-alpha-D-glucosidic linkages in polysaccharides containing three or more (1-&gt;4)-alpha-linked D-glucose units.. This chain is Alpha-amylase (amyS), found in Geobacillus stearothermophilus (Bacillus stearothermophilus).